Here is a 195-residue protein sequence, read N- to C-terminus: Cysteine/O-acetylserine efflux protein (195 aa).

The Periplasmic segment spans residues 1–9 (MTPMLLSAF). Residues 10 to 32 (WTYTLITALTPGPNNILALSAAT) traverse the membrane as a helical segment. Residues 33–46 (AHGFRQSIRVLAGM) lie on the Cytoplasmic side of the membrane. Residues 47–67 (SLGFLVVMLLCAGIAFSLAVI) traverse the membrane as a helical segment. The Periplasmic portion of the chain corresponds to 68 to 69 (DP). The chain crosses the membrane as a helical span at residues 70-90 (AIIHLLSWVGAAYILWLAWKI). At 91-104 (ATSPAADEKVRPKP) the chain is on the cytoplasmic side. The chain crosses the membrane as a helical span at residues 105–125 (VGFWVSFGLQFVNVKIILYGI). Over 126–141 (TALSTFVLPQTQALNW) the chain is Periplasmic. The helical transmembrane segment at 142–162 (VIGVSILLALIGTFGNVCWAL) threads the bilayer. Over 163 to 176 (AGHLFQRAFRHYGR) the chain is Cytoplasmic. The chain crosses the membrane as a helical span at residues 177-194 (QLNIILALLLVYCAVRIF). Residue Tyr195 is a topological domain, periplasmic.

The protein belongs to the Rht family.

It is found in the cell inner membrane. The catalysed reaction is O-acetyl-L-serine(in) = O-acetyl-L-serine(out). It carries out the reaction L-cysteine(in) = L-cysteine(out). Its function is as follows. Exporter of O-acetylserine (OAS) and cysteine. This is Cysteine/O-acetylserine efflux protein (eamB) from Salmonella paratyphi A (strain ATCC 9150 / SARB42).